The chain runs to 429 residues: Adenosylhomocysteinase (429 aa).

Residues T64, D136, and E161 each coordinate substrate. Position 162 to 164 (162 to 164 (TTT)) interacts with NAD(+). Residues K191 and D195 each contribute to the substrate site. NAD(+) contacts are provided by residues N196, 225 to 230 (GYGWCG), E248, N283, 304 to 306 (SGH), and N351.

It belongs to the adenosylhomocysteinase family. Requires NAD(+) as cofactor.

It localises to the cytoplasm. It catalyses the reaction S-adenosyl-L-homocysteine + H2O = L-homocysteine + adenosine. It participates in amino-acid biosynthesis; L-homocysteine biosynthesis; L-homocysteine from S-adenosyl-L-homocysteine: step 1/1. May play a key role in the regulation of the intracellular concentration of adenosylhomocysteine. This Thermosynechococcus vestitus (strain NIES-2133 / IAM M-273 / BP-1) protein is Adenosylhomocysteinase.